An 89-amino-acid chain; its full sequence is Small ribosomal subunit protein uS15 (89 aa).

This sequence belongs to the universal ribosomal protein uS15 family. In terms of assembly, part of the 30S ribosomal subunit. Forms a bridge to the 50S subunit in the 70S ribosome, contacting the 23S rRNA.

Functionally, one of the primary rRNA binding proteins, it binds directly to 16S rRNA where it helps nucleate assembly of the platform of the 30S subunit by binding and bridging several RNA helices of the 16S rRNA. Its function is as follows. Forms an intersubunit bridge (bridge B4) with the 23S rRNA of the 50S subunit in the ribosome. The protein is Small ribosomal subunit protein uS15 of Prochlorococcus marinus (strain MIT 9312).